The chain runs to 359 residues: 5-formaminoimidazole-4-carboxamide-1-(beta)-D-ribofuranosyl 5'-monophosphate synthetase (359 aa).

Residues H27 and S94 each coordinate 5-amino-1-(5-phospho-beta-D-ribosyl)imidazole-4-carboxamide. In terms of domain architecture, ATP-grasp spans 116 to 340 (RRLLRWESER…FGEIVTMGRR (225 aa)). Residues 146-208 (PEDI…TNFC) and E230 contribute to the ATP site. 5-amino-1-(5-phospho-beta-D-ribosyl)imidazole-4-carboxamide is bound at residue N258. The Mg(2+) site is built by Q297 and E310.

The protein belongs to the phosphohexose mutase family. It depends on Mg(2+) as a cofactor. Mn(2+) is required as a cofactor.

It catalyses the reaction 5-amino-1-(5-phospho-beta-D-ribosyl)imidazole-4-carboxamide + formate + ATP = 5-formamido-1-(5-phospho-D-ribosyl)imidazole-4-carboxamide + ADP + phosphate. The protein operates within purine metabolism; IMP biosynthesis via de novo pathway; 5-formamido-1-(5-phospho-D-ribosyl)imidazole-4-carboxamide from 5-amino-1-(5-phospho-D-ribosyl)imidazole-4-carboxamide (formate route): step 1/1. In terms of biological role, catalyzes the ATP- and formate-dependent formylation of 5-aminoimidazole-4-carboxamide-1-beta-d-ribofuranosyl 5'-monophosphate (AICAR) to 5-formaminoimidazole-4-carboxamide-1-beta-d-ribofuranosyl 5'-monophosphate (FAICAR) in the absence of folates. This chain is 5-formaminoimidazole-4-carboxamide-1-(beta)-D-ribofuranosyl 5'-monophosphate synthetase, found in Methanopyrus kandleri (strain AV19 / DSM 6324 / JCM 9639 / NBRC 100938).